The chain runs to 87 residues: Small ribosomal subunit protein uS15 (87 aa).

Belongs to the universal ribosomal protein uS15 family. In terms of assembly, part of the 30S ribosomal subunit. Forms a bridge to the 50S subunit in the 70S ribosome, contacting the 23S rRNA.

In terms of biological role, one of the primary rRNA binding proteins, it binds directly to 16S rRNA where it helps nucleate assembly of the platform of the 30S subunit by binding and bridging several RNA helices of the 16S rRNA. Forms an intersubunit bridge (bridge B4) with the 23S rRNA of the 50S subunit in the ribosome. The sequence is that of Small ribosomal subunit protein uS15 from Clostridium beijerinckii (strain ATCC 51743 / NCIMB 8052) (Clostridium acetobutylicum).